Reading from the N-terminus, the 402-residue chain is Putative F-box/kelch-repeat protein At1g61540 (402 aa).

One can recognise an F-box domain in the interval 24–70; the sequence is PISIMSLPYDLLLNCFSLVSRLYYPTLSLVSKTFRSIITSRELYEIR. 3 Kelch repeats span residues 135–189, 191–240, and 246–293; these read NIYK…CEVD, KIYI…EVKS, and KIYM…VVDN.

The sequence is that of Putative F-box/kelch-repeat protein At1g61540 from Arabidopsis thaliana (Mouse-ear cress).